We begin with the raw amino-acid sequence, 262 residues long: Shikimate dehydrogenase (NADP(+)) (262 aa).

Residues 15–17 (SRS) and T62 contribute to the shikimate site. Residue K66 is the Proton acceptor of the active site. E78 provides a ligand contact to NADP(+). N87 and D102 together coordinate shikimate. NADP(+) is bound by residues 126-130 (GAGGA), 150-155 (NRTLAR), and M214. Position 216 (Y216) interacts with shikimate. NADP(+) is bound at residue G236.

This sequence belongs to the shikimate dehydrogenase family. As to quaternary structure, homodimer.

The catalysed reaction is shikimate + NADP(+) = 3-dehydroshikimate + NADPH + H(+). The protein operates within metabolic intermediate biosynthesis; chorismate biosynthesis; chorismate from D-erythrose 4-phosphate and phosphoenolpyruvate: step 4/7. Its function is as follows. Involved in the biosynthesis of the chorismate, which leads to the biosynthesis of aromatic amino acids. Catalyzes the reversible NADPH linked reduction of 3-dehydroshikimate (DHSA) to yield shikimate (SA). This Acinetobacter baumannii (strain ATCC 17978 / DSM 105126 / CIP 53.77 / LMG 1025 / NCDC KC755 / 5377) protein is Shikimate dehydrogenase (NADP(+)).